We begin with the raw amino-acid sequence, 304 residues long: Deoxyribonuclease-1-like 1 (304 aa).

An N-terminal signal peptide occupies residues Met1–Ala24. N-linked (GlcNAc...) asparagine glycosylation is present at Asn92. Glu103 is a catalytic residue. The N-linked (GlcNAc...) asparagine glycan is linked to Asn123. His154 is an active-site residue. Cys193 and Cys230 are disulfide-bonded. The N-linked (GlcNAc...) asparagine glycan is linked to Asn229.

It belongs to the DNase I family.

The protein resides in the endoplasmic reticulum. This is Deoxyribonuclease-1-like 1 (DNASE1L1) from Cricetulus griseus (Chinese hamster).